The sequence spans 213 residues: Adenylate kinase (213 aa).

10 to 15 (GAGKGT) provides a ligand contact to ATP. Residues 30–59 (STGDMFRAAIKEGTEMGKKAKEYMDKGALV) are NMP. AMP contacts are provided by residues T31, R36, 57–59 (ALV), 85–88 (GFPR), and Q92. Positions 126–163 (GRRVCKNCGASYHVIFNPPQAEGKCNSCNGELYQRSDD) are LID. ATP is bound at residue R127. Zn(2+)-binding residues include C130 and C133. Position 136–137 (136–137 (SY)) interacts with ATP. The Zn(2+) site is built by C150 and C153. Residues R160 and R171 each coordinate AMP. Q199 contributes to the ATP binding site.

The protein belongs to the adenylate kinase family. Monomer.

The protein resides in the cytoplasm. It catalyses the reaction AMP + ATP = 2 ADP. The protein operates within purine metabolism; AMP biosynthesis via salvage pathway; AMP from ADP: step 1/1. In terms of biological role, catalyzes the reversible transfer of the terminal phosphate group between ATP and AMP. Plays an important role in cellular energy homeostasis and in adenine nucleotide metabolism. The chain is Adenylate kinase from Desulforamulus reducens (strain ATCC BAA-1160 / DSM 100696 / MI-1) (Desulfotomaculum reducens).